The sequence spans 348 residues: CCAAT/enhancer-binding protein beta (348 aa).

Residues 1-24 form a required for Lys-174 sumoylation region; it reads MQRLVVWDPVCLPLPPPPPAFKSM. At Arg3 the chain carries Asymmetric dimethylarginine; by CARM1. The segment at 24–135 is required for MYC transcriptional repression; the sequence is MEVANFYYEA…YGGKNCKKAA (112 aa). Lys43 carries the N6-acetyllysine; alternate modification. At Lys43 the chain carries N6-methylated lysine; alternate. Disordered regions lie at residues 44–65 and 79–112; these read AAPA…ELGS and LEPL…ASSG. Pro residues predominate over residues 47–59; it reads AAPPADRPGPRPP. Positions 116–124 match the 9aaTAD motif; that stretch reads DFLSDLFSD. N6-acetyllysine; by KAT2A and KAT2B is present on residues Lys129 and Lys132. Lys133 carries the N6-acetyllysine; by KAT2A and KAT2B; alternate modification. Residue Lys133 forms a Glycyl lysine isopeptide (Lys-Gly) (interchain with G-Cter in SUMO2); alternate linkage. The tract at residues 158 to 178 is disordered; it reads APLHPPPPPPPPPAELKAEPG. Residues 160–171 are compositionally biased toward pro residues; that stretch reads LHPPPPPPPPPA. Residue Lys174 forms a Glycyl lysine isopeptide (Lys-Gly) (interchain with G-Cter in SUMO2); alternate linkage. Residue Lys174 forms a Glycyl lysine isopeptide (Lys-Gly) (interchain with G-Cter in SUMO); alternate linkage. Glycyl lysine isopeptide (Lys-Gly) (interchain with G-Cter in SUMO2) cross-links involve residues Lys185 and Lys187. The segment covering 219–259 has biased composition (low complexity); it reads SGSSGSLSTSSSSSPPGTPSPADAKATPAAAACYAGAAPAP. The tract at residues 219–277 is disordered; the sequence is SGSSGSLSTSSSSSPPGTPSPADAKATPAAAACYAGAAPAPSQVKSKAKKTVDKHSDEY. Thr227 bears the Phosphothreonine; by GSK3-beta mark. Ser228 and Ser229 each carry an O-linked (GlcNAc) serine glycan. The residue at position 232 (Ser232) is a Phosphoserine; by GSK3-beta. The residue at position 236 (Thr236) is a Phosphothreonine; by RPS6KA1, CDK2 and MAPK. Glycyl lysine isopeptide (Lys-Gly) (interchain with G-Cter in SUMO2) cross-links involve residues Lys263 and Lys265. A compositionally biased stretch (basic and acidic residues) spans 268-277; the sequence is KTVDKHSDEY. Thr269 is subject to Phosphothreonine; by RPS6KA1 and PKC/PRKCA. A bZIP domain is found at 274–337; that stretch reads SDEYKIRRER…STLRNLFKTL (64 aa). The interval 278–298 is basic motif; the sequence is KIRRERNNIAVRKSRDKAKMR. Residue Ser291 is modified to Phosphoserine; by PKC/PRKCA. The segment at 300 to 307 is leucine-zipper; it reads LETQHKVL. Ser328 carries the phosphoserine; by CaMK2 modification. Lys335 is covalently cross-linked (Glycyl lysine isopeptide (Lys-Gly) (interchain with G-Cter in SUMO2)).

This sequence belongs to the bZIP family. C/EBP subfamily. Binds DNA as a homodimer and as a heterodimer. Interacts with ATF4. Binds DNA as a heterodimer with ATF4. Interacts with MYB; within the complex, MYB and CEBPB bind to different promoter regions. Can form stable heterodimers with CEBPA, CEBPD and CEBPG. Interacts with SIX1. Interacts with TRIM28 and PTGES2. Interacts with PRDM16. Interacts with CCDC85B. Forms a complex with THOC5. Interacts with ZNF638; this interaction increases transcriptional activation. Interacts with CIDEA and CIDEC; these interactions increase transcriptional activation of a subset of CEBPB downstream target genes. Interacts with DDIT3/CHOP. Interacts with EP300; recruits EP300 to chromatin. Interacts with RORA; the interaction disrupts interaction with EP300. Interacts (not methylated) with MED23, MED26, SMARCA2, SMARCB1 and SMARCC1. Interacts with KAT2A and KAT2B. Interacts with ATF5; EP300 is required for ATF5 and CEBPB interaction and DNA binding. Interacts with NFE2L1; the heterodimer represses expression of DSPP during odontoblast differentiation. In terms of processing, methylated. Methylation at Arg-3 by CARM1 and at Lys-43 by EHMT2 inhibit transactivation activity. Methylation is probably inhibited by phosphorylation at Thr-236. Sumoylated by polymeric chains of SUMO2 or SUMO3. Sumoylation at Lys-174 is required for inhibition of T-cells proliferation. In adipocytes, sumoylation at Lys-174 by PIAS1 leads to ubiquitination and subsequent proteasomal degradation. Desumoylated by SENP2, which abolishes ubiquitination and stabilizes protein levels. Post-translationally, ubiquitinated, leading to proteasomal degradation. In terms of processing, phosphorylated at Thr-236 by MAPK and CDK2, serves to prime phosphorylation at Thr-227 and Ser-232 by GSK3B and acquire DNA-binding as well as transactivation activities, required to induce adipogenesis. MAPK and CDK2 act sequentially to maintain Thr-236 in the primed phosphorylated state during mitotical cloning expansion and thereby progression of terminal differentiation. Phosphorylation at Thr-269 enhances transactivation activity. Phosphorylation at Ser-328 in response to calcium increases transactivation activity. Phosphorylated at Thr-236 by RPS6KA1. O-glycosylated, glycosylation at Ser-228 and Ser-229 prevents phosphorylation on Thr-236, Ser-232 and Thr-227 and DNA binding activity which delays the adipocyte differentiation program. Post-translationally, acetylated. Acetylation at Lys-43 is an important and dynamic regulatory event that contributes to its ability to transactivate target genes, including those associated with adipogenesis and adipocyte function. Deacetylation by HDAC1 represses its transactivation activity. Acetylated by KAT2A and KAT2B within a cluster of lysine residues between amino acids 129-133, this acetylation is strongly induced by glucocorticoid treatment and enhances transactivation activity.

The protein localises to the nucleus. It is found in the cytoplasm. In terms of biological role, important transcription factor regulating the expression of genes involved in immune and inflammatory responses. Also plays a significant role in adipogenesis, as well as in the gluconeogenic pathway, liver regeneration, and hematopoiesis. The consensus recognition site is 5'-T[TG]NNGNAA[TG]-3'. Its functional capacity is governed by protein interactions and post-translational protein modifications. During early embryogenesis, plays essential and redundant roles with CEBPA. Has a promitotic effect on many cell types such as hepatocytes and adipocytes but has an antiproliferative effect on T-cells by repressing MYC expression, facilitating differentiation along the T-helper 2 lineage. Binds to regulatory regions of several acute-phase and cytokines genes and plays a role in the regulation of acute-phase reaction and inflammation. Also plays a role in intracellular bacteria killing. During adipogenesis, is rapidly expressed and, after activation by phosphorylation, induces CEBPA and PPARG, which turn on the series of adipocyte genes that give rise to the adipocyte phenotype. The delayed transactivation of the CEBPA and PPARG genes by CEBPB appears necessary to allow mitotic clonal expansion and thereby progression of terminal differentiation. Essential for female reproduction because of a critical role in ovarian follicle development. Restricts osteoclastogenesis: together with NFE2L1; represses expression of DSPP during odontoblast differentiation. The sequence is that of CCAAT/enhancer-binding protein beta (CEBPB) from Bos taurus (Bovine).